The sequence spans 77 residues: MLCLPVFIILLLLASPAASNPLETRIQSDLIRAALEDADMKNEKNILSSIMGSLGTIGNVVGNVCCSITKSCCASEE.

The first 19 residues, 1 to 19, serve as a signal peptide directing secretion; the sequence is MLCLPVFIILLLLASPAAS. Positions 20 to 44 are excised as a propeptide; sequence NPLETRIQSDLIRAALEDADMKNEK.

This sequence belongs to the conotoxin T superfamily. Contains 2 disulfide bonds that can be either 'C1-C3, C2-C4' or 'C1-C4, C2-C3', since these disulfide connectivities have been observed for conotoxins with cysteine framework V (for examples, see AC P0DQQ7 and AC P81755). As to expression, expressed by the venom duct.

The protein resides in the secreted. This chain is Conotoxin Ar5.1 a, found in Conus arenatus (Sand-dusted cone).